An 85-amino-acid chain; its full sequence is Large ribosomal subunit protein bL27 (85 aa).

Residues 1–24 (MAHKKGVGSSRNGRDSDGQRLGCK) are disordered.

The protein belongs to the bacterial ribosomal protein bL27 family.

This chain is Large ribosomal subunit protein bL27, found in Geotalea daltonii (strain DSM 22248 / JCM 15807 / FRC-32) (Geobacter daltonii).